A 273-amino-acid polypeptide reads, in one-letter code: Proteasome subunit beta type-5-B (273 aa).

The propeptide at 1-57 (MKLDTSGLETTMPVIGFGSNSEMLDGFSSAPSFDLPRTTDFDGFQKKAVEMVKPAKG) is removed in mature form. T58 functions as the Nucleophile in the catalytic mechanism.

The protein belongs to the peptidase T1B family. In terms of assembly, component of the 20S core complex of the 26S proteasome. The 26S proteasome is composed of a core protease (CP), known as the 20S proteasome, capped at one or both ends by the 19S regulatory particle (RP/PA700). The 20S proteasome core is composed of 28 subunits that are arranged in four stacked rings, resulting in a barrel-shaped structure. The two end rings are each formed by seven alpha subunits, and the two central rings are each formed by seven beta subunits. The catalytic chamber with the active sites is on the inside of the barrel.

It localises to the cytoplasm. The protein resides in the nucleus. The enzyme catalyses Cleavage of peptide bonds with very broad specificity.. Functionally, the proteasome is a multicatalytic proteinase complex which is characterized by its ability to cleave peptides with Arg, Phe, Tyr, Leu, and Glu adjacent to the leaving group at neutral or slightly basic pH. The proteasome has an ATP-dependent proteolytic activity. The chain is Proteasome subunit beta type-5-B (PBE2) from Arabidopsis thaliana (Mouse-ear cress).